Consider the following 363-residue polypeptide: MSTQPSDSAEPGAAPAAVSTYAGVENTPTVPGSEPDAAKHAEEEPKVVNPTEPQPTAPVDNEPKPAAAPAQEADSPADIKDSVSTTAGELSPLAQLWKAAEGHAHFEIWGVPLSDPERHIPTQIIFQKFLNANEGQVEKAKDQLLKTLDWRQKTQPQQLLRKMFSKAKFDGLGYVTTYTAGDEPAVDEPEQKEVFTWNLYGSVKSLDETFGNLQEFVEWRVALMELGLMEINIGGAIKPITADYDPYKMTQVHDYKGISFLRQTDVAKAASKECIKVLGDNYPELLKEKFFLNIPAIMGFFYGLMKMFVSKKTLNKFHPMSSGTNLAKEFVNTKVDGLGDKLPAEYGGKGADLKTLGKAPIVT.

Residues 1-84 are disordered; it reads MSTQPSDSAE…SPADIKDSVS (84 aa). The span at 36–46 shows a compositional bias: basic and acidic residues; that stretch reads DAAKHAEEEPK. The segment covering 64-76 has biased composition (low complexity); sequence KPAAAPAQEADSP. In terms of domain architecture, CRAL-TRIO spans 180–354; it reads AGDEPAVDEP…EYGGKGADLK (175 aa). Y200, R220, H253, Y255, and K289 together coordinate heme.

It belongs to the SFH5 family. Heme b is required as a cofactor.

It localises to the cytoplasm. The protein localises to the endoplasmic reticulum membrane. It is found in the microsome membrane. The enzyme catalyses a 1,2-diacyl-sn-glycero-3-phospho-(1D-myo-inositol)(in) = a 1,2-diacyl-sn-glycero-3-phospho-(1D-myo-inositol)(out). Functionally, non-classical phosphatidylinositol (PtdIns) transfer protein (PITP), which exhibits PtdIns-binding/transfer activity in the absence of detectable PtdCho-binding/transfer activity. Regulates PtdIns(4,5)P2 homeostasis at the plasma membrane. Heme-binding protein that may play a role in organic oxidant-induced stress responses. The protein is Phosphatidylinositol transfer protein sfh-5 (sfh-5) of Neurospora crassa (strain ATCC 24698 / 74-OR23-1A / CBS 708.71 / DSM 1257 / FGSC 987).